The following is a 278-amino-acid chain: 4-deoxy-L-threo-5-hexosulose-uronate ketol-isomerase (278 aa).

Zn(2+)-binding residues include His196, His198, Glu203, and His245.

It belongs to the KduI family. As to quaternary structure, homohexamer. It depends on Zn(2+) as a cofactor.

It carries out the reaction 5-dehydro-4-deoxy-D-glucuronate = 3-deoxy-D-glycero-2,5-hexodiulosonate. The protein operates within glycan metabolism; pectin degradation; 2-dehydro-3-deoxy-D-gluconate from pectin: step 4/5. Catalyzes the isomerization of 5-dehydro-4-deoxy-D-glucuronate to 3-deoxy-D-glycero-2,5-hexodiulosonate. This Escherichia coli O139:H28 (strain E24377A / ETEC) protein is 4-deoxy-L-threo-5-hexosulose-uronate ketol-isomerase.